A 94-amino-acid polypeptide reads, in one-letter code: Small nuclear ribonucleoprotein E (94 aa).

One can recognise a Sm domain in the interval 14-94; it reads INCIFNFLQQ…DNITLITSAD (81 aa).

This sequence belongs to the snRNP Sm proteins family. In terms of assembly, component of the Sm core complex, present in spliceosomal snRNP U1, U2, U4/U6 and U5. The core complex contains SMB1, SMD1, SMD2, SMD3, SME1, SMX3 and SMX2 (Sm proteins B, D1, D2, D3, E, F and G, respectively), and is probably a heptameric ring structure. SME1 specifically interacts with SMX2 and SMX3. Component of the U4/U6-U5 tri-snRNP complex composed of the U4, U6 and U5 snRNAs and at least PRP3, PRP4, PRP6, PRP8, PRP18, PRP31, PRP38, SNU13, SNU23, SNU66, SNU114, SPP381, SMB1, SMD1, SMD2, SMD3, SMX2, SMX3, LSM2, LSM3, LSM4, LSM5, LSM6, LSM7, LSM8, BRR2 and DIB1.

The protein localises to the cytoplasm. Its subcellular location is the nucleus. Functionally, involved in pre-mRNA splicing. Binds and is required for the stability of snRNA U1, U2, U4 and U5 which contain a highly conserved structural motif called the Sm binding site. Involved in cap modification. This Saccharomyces cerevisiae (strain ATCC 204508 / S288c) (Baker's yeast) protein is Small nuclear ribonucleoprotein E (SME1).